We begin with the raw amino-acid sequence, 446 residues long: Tubulin beta-8 chain (446 aa).

GTP contacts are provided by Gln-11, Glu-69, Ser-138, Gly-142, Thr-143, Gly-144, Asn-204, and Asn-226. Residue Glu-69 coordinates Mg(2+). Residues 426-446 are disordered; that stretch reads QDATAEDDYDEDDDAAAADEA. The span at 429–446 shows a compositional bias: acidic residues; it reads TAEDDYDEDDDAAAADEA.

Belongs to the tubulin family. Dimer of alpha and beta chains. A typical microtubule is a hollow water-filled tube with an outer diameter of 25 nm and an inner diameter of 15 nM. Alpha-beta heterodimers associate head-to-tail to form protofilaments running lengthwise along the microtubule wall with the beta-tubulin subunit facing the microtubule plus end conferring a structural polarity. Microtubules usually have 13 protofilaments but different protofilament numbers can be found in some organisms and specialized cells. Requires Mg(2+) as cofactor. As to expression, expressed in anthers.

The protein localises to the cytoplasm. It is found in the cytoskeleton. Tubulin is the major constituent of microtubules, a cylinder consisting of laterally associated linear protofilaments composed of alpha- and beta-tubulin heterodimers. Microtubules grow by the addition of GTP-tubulin dimers to the microtubule end, where a stabilizing cap forms. Below the cap, tubulin dimers are in GDP-bound state, owing to GTPase activity of alpha-tubulin. The sequence is that of Tubulin beta-8 chain (TUBB8) from Oryza sativa subsp. japonica (Rice).